The sequence spans 613 residues: MKKAKLIFKDNTPFSLDFDDFYFNSKDGLNESKFVYTHSFEWKNQENFIIAESGFGIGLNFFLTLKRLLETTPSKRPKKLFYISVEAFYIEKEQLREIYQKLEFYEEFKELLEQFLKFYPKAKEGIYRFYFEDCFLDLVFEDIAVLKELDFKADVWYLDGFSPNKNLQMFDENLIFEVARLSKKNTQICTFSSASFLQKNLKKYGFRVEKTKGFRKREMIKAYLENELEFKDKEAYFSRTFSSLKNKKVAIIGAGISSAVLAYELSLRGFEIDVFEKYLELGKGASGNESGILSSLILKPKVNLGEFSELSFIEASRFYRQILDLEFKGVVEFAHNDLMQERFDTQRENVLFKISKNQAFLEEGGVIFPKNLVKNLFEKSKACIYFNHEFQAYKFKNECFTLKFKNDIVKSDYAVLIYAMGADTKDFVFYDEMKLSKVRGQVTHLKPFLDTPFPLSSKAYICPVKDDLQVIGASYDRLNASLESKEEDDKQNIENIAEFIDKNTKLEIIGSKVGFRSYSSDRFMIVGNAYDEVFYKEEYKALLWTKNKEQKPAKMSCNLYFNFAHGSRGFSTSVLAARYLCALINNEPLCLEKKYIHAIHPARFLIRKLKKGL.

The tRNA (mnm(5)s(2)U34)-methyltransferase stretch occupies residues 1–225 (MKKAKLIFKD…KREMIKAYLE (225 aa)). The tract at residues 252-613 (IGAGISSAVL…FLIRKLKKGL (362 aa)) is FAD-dependent cmnm(5)s(2)U34 oxidoreductase.

It in the N-terminal section; belongs to the methyltransferase superfamily. tRNA (mnm(5)s(2)U34)-methyltransferase family. In the C-terminal section; belongs to the DAO family. Requires FAD as cofactor.

It localises to the cytoplasm. It carries out the reaction 5-aminomethyl-2-thiouridine(34) in tRNA + S-adenosyl-L-methionine = 5-methylaminomethyl-2-thiouridine(34) in tRNA + S-adenosyl-L-homocysteine + H(+). Catalyzes the last two steps in the biosynthesis of 5-methylaminomethyl-2-thiouridine (mnm(5)s(2)U) at the wobble position (U34) in tRNA. Catalyzes the FAD-dependent demodification of cmnm(5)s(2)U34 to nm(5)s(2)U34, followed by the transfer of a methyl group from S-adenosyl-L-methionine to nm(5)s(2)U34, to form mnm(5)s(2)U34. The sequence is that of tRNA 5-methylaminomethyl-2-thiouridine biosynthesis bifunctional protein MnmC from Campylobacter jejuni (strain RM1221).